The chain runs to 538 residues: Phosphoenolpyruvate carboxykinase (ATP) (538 aa).

Residues R64, Y205, and K211 each contribute to the substrate site. ATP contacts are provided by residues K211, H230, and 246–254; that span reads GLSGTGKTT. Mn(2+)-binding residues include K211 and H230. Position 267 (D267) interacts with Mn(2+). Residues E295, R331, 447 to 448, and T453 each bind ATP; that span reads RI. Residue R331 participates in substrate binding.

The protein belongs to the phosphoenolpyruvate carboxykinase (ATP) family. In terms of assembly, monomer. The cofactor is Mn(2+).

The protein localises to the cytoplasm. The catalysed reaction is oxaloacetate + ATP = phosphoenolpyruvate + ADP + CO2. The protein operates within carbohydrate biosynthesis; gluconeogenesis. In terms of biological role, involved in the gluconeogenesis. Catalyzes the conversion of oxaloacetate (OAA) to phosphoenolpyruvate (PEP) through direct phosphoryl transfer between the nucleoside triphosphate and OAA. This Haemophilus influenzae (strain PittGG) protein is Phosphoenolpyruvate carboxykinase (ATP).